The chain runs to 405 residues: Tryptophan synthase beta chain (405 aa).

Residue Lys98 is modified to N6-(pyridoxal phosphate)lysine.

It belongs to the TrpB family. As to quaternary structure, tetramer of two alpha and two beta chains. The cofactor is pyridoxal 5'-phosphate.

The enzyme catalyses (1S,2R)-1-C-(indol-3-yl)glycerol 3-phosphate + L-serine = D-glyceraldehyde 3-phosphate + L-tryptophan + H2O. Its pathway is amino-acid biosynthesis; L-tryptophan biosynthesis; L-tryptophan from chorismate: step 5/5. Its function is as follows. The beta subunit is responsible for the synthesis of L-tryptophan from indole and L-serine. This Xanthomonas euvesicatoria pv. vesicatoria (strain 85-10) (Xanthomonas campestris pv. vesicatoria) protein is Tryptophan synthase beta chain.